Here is a 254-residue protein sequence, read N- to C-terminus: MKIDLNCDLGEGFGVWQMGDDAAMMQIATSVNIACGFHAGDPDIMHATVKLAKQNGVAIGAHPGFRDLHGFGRRPVPGITAAEIENLVAYQIGALQAVAALAGHKVTHVKAHGALSNVACEDDMTARAIASAIKAVDPSLVFVVLANSKLMLAGEAAGLPLAHEVFADRAYEDDGNLVSRKKPGAVLHDPNEIAERVLRMAQDGAVVSVTGKVIKMRTDTVCIHGDTKGAVEIARGVRRKLEASGITVAPFAGT.

It belongs to the LamB/PxpA family. In terms of assembly, forms a complex composed of PxpA, PxpB and PxpC.

The catalysed reaction is 5-oxo-L-proline + ATP + 2 H2O = L-glutamate + ADP + phosphate + H(+). Its function is as follows. Catalyzes the cleavage of 5-oxoproline to form L-glutamate coupled to the hydrolysis of ATP to ADP and inorganic phosphate. The sequence is that of 5-oxoprolinase subunit A from Rhodopseudomonas palustris (strain ATCC BAA-98 / CGA009).